A 256-amino-acid polypeptide reads, in one-letter code: 1-(5-phosphoribosyl)-5-[(5-phosphoribosylamino)methylideneamino] imidazole-4-carboxamide isomerase (256 aa).

Asp8 acts as the Proton acceptor in catalysis. Residue Asp130 is the Proton donor of the active site.

Belongs to the HisA/HisF family.

It is found in the cytoplasm. The catalysed reaction is 1-(5-phospho-beta-D-ribosyl)-5-[(5-phospho-beta-D-ribosylamino)methylideneamino]imidazole-4-carboxamide = 5-[(5-phospho-1-deoxy-D-ribulos-1-ylimino)methylamino]-1-(5-phospho-beta-D-ribosyl)imidazole-4-carboxamide. It functions in the pathway amino-acid biosynthesis; L-histidine biosynthesis; L-histidine from 5-phospho-alpha-D-ribose 1-diphosphate: step 4/9. This is 1-(5-phosphoribosyl)-5-[(5-phosphoribosylamino)methylideneamino] imidazole-4-carboxamide isomerase from Pelodictyon phaeoclathratiforme (strain DSM 5477 / BU-1).